Here is a 798-residue protein sequence, read N- to C-terminus: MTSYQSQLGDGGGGEPIAEELAESQQSISIAEFFEKNKQMLGFDSDAKALVTAVKEAVDNALDAAEEAGILPDIYVEIEDRGDYYRLTVEDNGPGITKEQIPKVFGKLLYGSRFHAREQTRGQQGIGISAAVLYSQLTSGKPAKITSKTDSHSSAQYFELTIDTDTNEPEIDHEREATWERPHGTRIELEMEGNMRARKQLHDYIKYTAVVNPHARVEFHEPEDSFKSERATEELPPETEEIRPHPHGVELGTLLKMLDATDSYSLSGFLQAEFTRVGNKTADGVIDSFRDRHFGREMAWSPPQPHEDVDIETAVSDAVANKSAEATAAFARAVADEVTDMAALSHAELSAVVASVADDIEAEHDETFGETVRENAVEAAWKSVTDDVSADCYALVDGATTTRKDDAAVEGLSRRLAEKFTDQEDARNRFRRSTLREFVDRAADATEEYDDATFGETARENVVEAVWERAVTVPDEPPTVTEVADNRDAAARLLEAMRSTDILSPPTDCLAPISEDLVKAGLKKEYDAEFYTSVTRDASVHGGDPFVVEVGIAHGGDIAVDGSVETLRFANRVPLVYQRGACATVDVLKGVNWRNYGLDQPGGSGMPSGPAVIMVHVASTSVPFTSESKDAVANIPEIEDELRLALQQAGRDLQSHLKKQRSLEKRRRKQDVIADILPDMAAKLSEVTDREPLDVEDSLARIMNNVLVERTVEESTVQLSVHNYGDTNVGPEVTDIVSQEPDGAESATVVEMDGEWFLKWSPTVGGGETATLEYEVDGDAEFDISVEGIEAEKLTVDA.

ATP is bound by residues Asn-60, Asp-91, 112 to 113, and 122 to 129; these read SR and GQQGIGIS. Residues 221–233 show a composition bias toward basic and acidic residues; the sequence is EPEDSFKSERATE. Residues 221–245 form a disordered region; it reads EPEDSFKSERATEELPPETEEIRPH. Position 629 (Lys-629) interacts with ATP.

Belongs to the TOP6B family. Homodimer. Heterotetramer of two Top6A and two Top6B chains.

The enzyme catalyses ATP-dependent breakage, passage and rejoining of double-stranded DNA.. Its function is as follows. Relaxes both positive and negative superturns and exhibits a strong decatenase activity. In Natronomonas pharaonis (strain ATCC 35678 / DSM 2160 / CIP 103997 / JCM 8858 / NBRC 14720 / NCIMB 2260 / Gabara) (Halobacterium pharaonis), this protein is Type 2 DNA topoisomerase 6 subunit B.